The sequence spans 806 residues: Lon protease (806 aa).

The Lon N-terminal domain maps to 13–206 (LPMMPIRDVV…RVAEMLDIEI (194 aa)). 356 to 363 (GPPGVGKT) contacts ATP. The Lon proteolytic domain maps to 599 to 780 (KNEIGAATGL…DEVLKIALER (182 aa)). Catalysis depends on residues serine 686 and lysine 729.

Belongs to the peptidase S16 family. In terms of assembly, homohexamer. Organized in a ring with a central cavity.

The protein resides in the cytoplasm. The catalysed reaction is Hydrolysis of proteins in presence of ATP.. ATP-dependent serine protease that mediates the selective degradation of mutant and abnormal proteins as well as certain short-lived regulatory proteins. Required for cellular homeostasis and for survival from DNA damage and developmental changes induced by stress. Degrades polypeptides processively to yield small peptide fragments that are 5 to 10 amino acids long. Binds to DNA in a double-stranded, site-specific manner. The sequence is that of Lon protease from Solibacter usitatus (strain Ellin6076).